We begin with the raw amino-acid sequence, 487 residues long: MAKAVRKSNSEETVPIKAPRKAPGEKIPVVSIVGRQNVGKSTLFNSLLKKKLAITEDYPGVTRDVLSARVYQEEKDLDFYLCDTPGLDIENPDSLSQSILEAAYRQLNESDVIIFLLDKNLVTVADHTLLDYLRKKYGPVDKPIIYCVNKADKELDEFDLEEFYRMGLPEVLPISATGRKNLGLLLEKIKFFLSSKPGKVWIEKISASKKKDAQPLPLAEEDYEFRLAIVGKPNSGKSSLLNAVCGYERAVVSDVAGTTRDSVDTLLEFGNRKLLLTDTAGIRKHSKTAEALEYYSYQRTLKAIESSDLVIHLLDAKKGFGDFDKKITSLLQEKGKPFLIAVNKWDSIEDKTDKTFREYKEKLYSRFPLLNEVPIVTISATERLRVQKLIDLSFDLASRSRRKVSTSELNKNLKNWMSQAGRSFSAHQPPKMLYCTQVSTSPFHLILFVNHVEYFKSNLISFLKKKLTEAYDLQGIPVRLEFRSDRK.

The segment at 1 to 20 is disordered; the sequence is MAKAVRKSNSEETVPIKAPR. EngA-type G domains follow at residues 28–197 and 225–401; these read PVVS…SSKP and FRLA…SRSR. Residues 34 to 41, 83 to 87, 149 to 152, 231 to 238, 278 to 282, and 343 to 346 contribute to the GTP site; these read GRQNVGKS, DTPGL, NKAD, GKPNSGKS, DTAGI, and NKWD. The KH-like domain maps to 402-486; the sequence is RKVSTSELNK…PVRLEFRSDR (85 aa).

Belongs to the TRAFAC class TrmE-Era-EngA-EngB-Septin-like GTPase superfamily. EngA (Der) GTPase family. Associates with the 50S ribosomal subunit.

In terms of biological role, GTPase that plays an essential role in the late steps of ribosome biogenesis. The protein is GTPase Der of Leptospira borgpetersenii serovar Hardjo-bovis (strain L550).